We begin with the raw amino-acid sequence, 272 residues long: Acetylglutamate kinase (272 aa).

Residues 41 to 42 (GG), arginine 63, and asparagine 166 each bind substrate.

It belongs to the acetylglutamate kinase family. ArgB subfamily.

It localises to the cytoplasm. It carries out the reaction N-acetyl-L-glutamate + ATP = N-acetyl-L-glutamyl 5-phosphate + ADP. It functions in the pathway amino-acid biosynthesis; L-arginine biosynthesis; N(2)-acetyl-L-ornithine from L-glutamate: step 2/4. Functionally, catalyzes the ATP-dependent phosphorylation of N-acetyl-L-glutamate. In Anaeromyxobacter dehalogenans (strain 2CP-1 / ATCC BAA-258), this protein is Acetylglutamate kinase.